The chain runs to 396 residues: Probable sugar efflux transporter (396 aa).

Transmembrane regions (helical) follow at residues 15 to 35 (VVTL…PVGL), 50 to 70 (VGIM…PFML), 81 to 101 (LICL…SWSF), 103 to 123 (VLVI…SITA), 136 to 156 (AQAL…GLPL), 170 to 190 (FFAI…LLPL), 209 to 229 (PALM…YTAY), 246 to 266 (FATA…VIFG), 275 to 295 (ALVS…LPAA), 299 to 319 (IHLG…GLGM), 333 to 353 (VAMA…ALVG), and 364 to 384 (MIGY…IIIF).

This sequence belongs to the major facilitator superfamily. SotB (TC 2.A.1.2) family.

It is found in the cell inner membrane. Its function is as follows. Involved in the efflux of sugars. The physiological role may be the reduction of the intracellular concentration of toxic sugars or sugar metabolites. The polypeptide is Probable sugar efflux transporter (Escherichia coli O139:H28 (strain E24377A / ETEC)).